Consider the following 319-residue polypeptide: Chromoplast-specific carotenoid-associated protein C2, chromoplastic (319 aa).

Residues Met1–Arg55 constitute a chromoplast transit peptide.

Belongs to the PAP/fibrillin family.

The protein localises to the plastid. Its subcellular location is the chromoplast. May be involved in carotenoid sequestration within chromoplasts. In Oncidium hybrid cultivar (Orchid), this protein is Chromoplast-specific carotenoid-associated protein C2, chromoplastic (CHRC2).